Reading from the N-terminus, the 488-residue chain is Glutamyl-tRNA(Gln) amidotransferase subunit A (488 aa).

Active-site charge relay system residues include Lys77 and Ser152. Ser176 serves as the catalytic Acyl-ester intermediate.

This sequence belongs to the amidase family. GatA subfamily. Heterotrimer of A, B and C subunits.

The catalysed reaction is L-glutamyl-tRNA(Gln) + L-glutamine + ATP + H2O = L-glutaminyl-tRNA(Gln) + L-glutamate + ADP + phosphate + H(+). In terms of biological role, allows the formation of correctly charged Gln-tRNA(Gln) through the transamidation of misacylated Glu-tRNA(Gln) in organisms which lack glutaminyl-tRNA synthetase. The reaction takes place in the presence of glutamine and ATP through an activated gamma-phospho-Glu-tRNA(Gln). This Streptococcus uberis (strain ATCC BAA-854 / 0140J) protein is Glutamyl-tRNA(Gln) amidotransferase subunit A.